A 164-amino-acid chain; its full sequence is General odorant-binding protein 1 (164 aa).

The N-terminal stretch at 1-19 is a signal peptide; the sequence is MPGVLRALLLLAAAAPLLA. Disulfide bonds link C38/C73, C69/C127, and C116/C136.

It belongs to the PBP/GOBP family. As to expression, antenna.

Present in the aqueous fluid surrounding olfactory sensory dendrites and are thought to aid in the capture and transport of hydrophobic odorants into and through this fluid. This chain is General odorant-binding protein 1, found in Heliothis virescens (Tobacco budworm moth).